The chain runs to 137 residues: S-adenosylmethionine decarboxylase proenzyme (137 aa).

The Schiff-base intermediate with substrate; via pyruvic acid role is filled by Ser-63. Position 63 is a pyruvic acid (Ser); by autocatalysis (Ser-63). His-68 (proton acceptor; for processing activity) is an active-site residue. The active-site Proton donor; for catalytic activity is the Cys-83.

It belongs to the prokaryotic AdoMetDC family. Type 1 subfamily. As to quaternary structure, heterotetramer of two alpha and two beta chains arranged as a dimer of alpha/beta heterodimers. It depends on pyruvate as a cofactor. Is synthesized initially as an inactive proenzyme. Formation of the active enzyme involves a self-maturation process in which the active site pyruvoyl group is generated from an internal serine residue via an autocatalytic post-translational modification. Two non-identical subunits are generated from the proenzyme in this reaction, and the pyruvate is formed at the N-terminus of the alpha chain, which is derived from the carboxyl end of the proenzyme. The post-translation cleavage follows an unusual pathway, termed non-hydrolytic serinolysis, in which the side chain hydroxyl group of the serine supplies its oxygen atom to form the C-terminus of the beta chain, while the remainder of the serine residue undergoes an oxidative deamination to produce ammonia and the pyruvoyl group blocking the N-terminus of the alpha chain.

It catalyses the reaction S-adenosyl-L-methionine + H(+) = S-adenosyl 3-(methylsulfanyl)propylamine + CO2. The protein operates within amine and polyamine biosynthesis; S-adenosylmethioninamine biosynthesis; S-adenosylmethioninamine from S-adenosyl-L-methionine: step 1/1. Its function is as follows. Catalyzes the decarboxylation of S-adenosylmethionine to S-adenosylmethioninamine (dcAdoMet), the propylamine donor required for the synthesis of the polyamines spermine and spermidine from the diamine putrescine. This is S-adenosylmethionine decarboxylase proenzyme from Fervidobacterium nodosum (strain ATCC 35602 / DSM 5306 / Rt17-B1).